The following is a 367-amino-acid chain: DNA replication and repair protein RecF (367 aa).

Residue Gly30 to Thr37 participates in ATP binding.

It belongs to the RecF family.

Its subcellular location is the cytoplasm. In terms of biological role, the RecF protein is involved in DNA metabolism; it is required for DNA replication and normal SOS inducibility. RecF binds preferentially to single-stranded, linear DNA. It also seems to bind ATP. This chain is DNA replication and repair protein RecF, found in Chlamydia caviae (strain ATCC VR-813 / DSM 19441 / 03DC25 / GPIC) (Chlamydophila caviae).